A 222-amino-acid polypeptide reads, in one-letter code: Superoxide dismutase [Mn], mitochondrial (222 aa).

A mitochondrion-targeting transit peptide spans M1–Q24. H50 is a binding site for Mn(2+). The residue at position 58 (Y58) is a 3'-nitrotyrosine. Residues K68 and K75 each carry the N6-acetyllysine; alternate modification. 2 positions are modified to N6-succinyllysine; alternate: K68 and K75. H98 is a Mn(2+) binding site. Position 114 is an N6-acetyllysine (K114). N6-acetyllysine; alternate occurs at positions 122 and 130. N6-succinyllysine; alternate is present on residues K122 and K130. Mn(2+) contacts are provided by D183 and H187. K202 is subject to N6-acetyllysine.

Belongs to the iron/manganese superoxide dismutase family. In terms of assembly, homotetramer. It depends on Mn(2+) as a cofactor. Post-translationally, nitrated under oxidative stress. Nitration coupled with oxidation inhibits the catalytic activity. In terms of processing, acetylation at Lys-122 decreases enzymatic activity. Deacetylated by SIRT3 upon exposure to ionizing radiations or after long fasting. Polyubiquitinated; leading to proteasomal degradation. Deubiquitinated by USP36 which increases protein stability.

Its subcellular location is the mitochondrion matrix. The catalysed reaction is 2 superoxide + 2 H(+) = H2O2 + O2. Destroys superoxide anion radicals which are normally produced within the cells and which are toxic to biological systems. The sequence is that of Superoxide dismutase [Mn], mitochondrial (SOD2) from Equus caballus (Horse).